A 64-amino-acid chain; its full sequence is Translation machinery-associated protein 7 homolog (64 aa).

The disordered stretch occupies residues 1 to 64; it reads MSGRQGGKAK…GGGIKKSGKK (64 aa). Positions 21–50 form a coiled coil; the sequence is DLSEEDVEFKKKQQEEAKKIKEMAAKAGQR. Over residues 28 to 44 the composition is skewed to basic and acidic residues; that stretch reads EFKKKQQEEAKKIKEMA. Residues 53–64 show a composition bias toward gly residues; sequence LLGGGIKKSGKK.

The protein belongs to the TMA7 family.

This chain is Translation machinery-associated protein 7 homolog, found in Caenorhabditis elegans.